Consider the following 139-residue polypeptide: UPF0102 protein Caul_0175 (139 aa).

It belongs to the UPF0102 family.

The chain is UPF0102 protein Caul_0175 from Caulobacter sp. (strain K31).